Reading from the N-terminus, the 121-residue chain is Ribosome-binding factor A (121 aa).

It belongs to the RbfA family. In terms of assembly, monomer. Binds 30S ribosomal subunits, but not 50S ribosomal subunits or 70S ribosomes.

The protein resides in the cytoplasm. Its function is as follows. One of several proteins that assist in the late maturation steps of the functional core of the 30S ribosomal subunit. Associates with free 30S ribosomal subunits (but not with 30S subunits that are part of 70S ribosomes or polysomes). Required for efficient processing of 16S rRNA. May interact with the 5'-terminal helix region of 16S rRNA. In Heliobacterium modesticaldum (strain ATCC 51547 / Ice1), this protein is Ribosome-binding factor A.